Consider the following 81-residue polypeptide: MYKGIFLCVLLAVICANSLATPSSDADEDNDEVERYVRGWASKIGQTLGKIAKVGLKELIQPKREAMLRSAEAQGKRPWIL.

An N-terminal signal peptide occupies residues 1–20; sequence MYKGIFLCVLLAVICANSLA. Positions 21–37 are excised as a propeptide; that stretch reads TPSSDADEDNDEVERYV. Positions 65-73 are cleaved as a propeptide — removed in mature form by a dipeptidylpeptidase; the sequence is EAMLRSAEA.

The protein belongs to the gastrin/cholecystokinin family. Magainin subfamily. As to expression, XPF is synthesized in the stomach and stored in a novel granular multinucleated cell in the gastric mucosa, it is stored as active, processed peptides in large granules within the granular gland secretions of the skin.

Its subcellular location is the secreted. Its function is as follows. Xenopsin is a neurotensin-like octapeptide. XPF has antimicrobial activity. The protein is Xenopsin peptides of Xenopus laevis (African clawed frog).